We begin with the raw amino-acid sequence, 55 residues long: Cop-6 protein (55 aa).

This sequence belongs to the transcriptional regulatory CopG/NikR family.

Acts in trans as a negative regulatory element in pE194 replication. The chain is Cop-6 protein from Staphylococcus aureus.